The chain runs to 418 residues: Gamma-glutamyl phosphate reductase (418 aa).

The protein belongs to the gamma-glutamyl phosphate reductase family.

The protein resides in the cytoplasm. The catalysed reaction is L-glutamate 5-semialdehyde + phosphate + NADP(+) = L-glutamyl 5-phosphate + NADPH + H(+). It participates in amino-acid biosynthesis; L-proline biosynthesis; L-glutamate 5-semialdehyde from L-glutamate: step 2/2. Functionally, catalyzes the NADPH-dependent reduction of L-glutamate 5-phosphate into L-glutamate 5-semialdehyde and phosphate. The product spontaneously undergoes cyclization to form 1-pyrroline-5-carboxylate. The polypeptide is Gamma-glutamyl phosphate reductase (Aliivibrio fischeri (strain MJ11) (Vibrio fischeri)).